The sequence spans 379 residues: Succinyl-diaminopimelate desuccinylase (379 aa).

Position 70 (H70) interacts with Zn(2+). D72 is an active-site residue. Residue D103 coordinates Zn(2+). The active-site Proton acceptor is the E137. Residues E138, E166, and H352 each contribute to the Zn(2+) site.

The protein belongs to the peptidase M20A family. DapE subfamily. As to quaternary structure, homodimer. Zn(2+) is required as a cofactor. The cofactor is Co(2+).

It carries out the reaction N-succinyl-(2S,6S)-2,6-diaminopimelate + H2O = (2S,6S)-2,6-diaminopimelate + succinate. Its pathway is amino-acid biosynthesis; L-lysine biosynthesis via DAP pathway; LL-2,6-diaminopimelate from (S)-tetrahydrodipicolinate (succinylase route): step 3/3. In terms of biological role, catalyzes the hydrolysis of N-succinyl-L,L-diaminopimelic acid (SDAP), forming succinate and LL-2,6-diaminopimelate (DAP), an intermediate involved in the bacterial biosynthesis of lysine and meso-diaminopimelic acid, an essential component of bacterial cell walls. The polypeptide is Succinyl-diaminopimelate desuccinylase (Shewanella baltica (strain OS223)).